The primary structure comprises 238 residues: Sugar fermentation stimulation protein homolog (238 aa).

This sequence belongs to the SfsA family.

In Histophilus somni (strain 129Pt) (Haemophilus somnus), this protein is Sugar fermentation stimulation protein homolog.